A 429-amino-acid chain; its full sequence is MMNKIVLDENEIPKKWYNINPDLPSPLPEPKNPEGGKNIENLPRVFSRGVLEQEMSMERWIKIPREVMDVYKMIGRPTPLFRAKGLEEMLDTPARIYYKREDYSPTGSHKLNTAIAQAYYARKDGAERLTTETGAGQWGTALSLACSLMDLQCKVYMVRVSFNQKPFRKTIMQLYGGEVVPSPSNHTEFGRRMLKEDPEHPGSLGIAISEAMEEALQEENVYYSLGSVLNHVLLHQTVIGLETKKQLEIAGETPDIMIGCVGGGSNFGGAIFPFVKDKLDGKLDCEFIAAEPKSCPTLTAGEYRYDFGDTAGMTPLLKMYTLGHDFVPPSVHAGGLRYHGMSPQVALLVREGVINARAVPQHTIFESGVKFAKAEGVVPAPETCHAISVAIDEARKCRETGEEKTIVISFSGHGLLDLKGYGDYLEGKI.

The segment at 18 to 40 is disordered; that stretch reads NINPDLPSPLPEPKNPEGGKNIE. N6-(pyridoxal phosphate)lysine is present on lysine 110.

The protein belongs to the TrpB family. As to quaternary structure, tetramer of two alpha and two beta chains. The cofactor is pyridoxal 5'-phosphate.

The catalysed reaction is (1S,2R)-1-C-(indol-3-yl)glycerol 3-phosphate + L-serine = D-glyceraldehyde 3-phosphate + L-tryptophan + H2O. Its pathway is amino-acid biosynthesis; L-tryptophan biosynthesis; L-tryptophan from chorismate: step 5/5. Its function is as follows. The beta subunit is responsible for the synthesis of L-tryptophan from indole and L-serine. In Methanothermobacter thermautotrophicus (strain ATCC 29096 / DSM 1053 / JCM 10044 / NBRC 100330 / Delta H) (Methanobacterium thermoautotrophicum), this protein is Tryptophan synthase beta chain 2 (trpB2).